The following is a 550-amino-acid chain: Neuronal acetylcholine receptor subunit alpha-9-II (550 aa).

An N-terminal signal peptide occupies residues 1–20; that stretch reads MRKMVPVVCFATMLLQVAHS. Topologically, residues 21 to 233 are extracellular; that stretch reads AQGRYAQQLL…YTVLLQRRSS (213 aa). N52 carries N-linked (GlcNAc...) asparagine glycosylation. C150 and C164 are joined by a disulfide. Residue N165 is glycosylated (N-linked (GlcNAc...) asparagine). A disulfide bond links C214 and C215. 3 consecutive transmembrane segments (helical) span residues 234 to 254, 264 to 284, and 298 to 318; these read FYIFNLLLPCFLISFLAPLGF, VSLGVTVLLALTVFQLMVAES, and YIATMTMITASTALTIFIMNI. The Cytoplasmic portion of the chain corresponds to 319–528; the sequence is HFCGAEAKPV…WKRVAKVMDR (210 aa). The disordered stretch occupies residues 357–439; sequence TSSSSSSSSS…HLSSSKYEGF (83 aa). The segment covering 358-367 has biased composition (low complexity); it reads SSSSSSSSSS. Basic residues predominate over residues 413–422; sequence RHPKPRHQHH. A helical membrane pass occupies residues 529–549; the sequence is FFMWIFFIMVFLMSILIIGKA.

Belongs to the ligand-gated ion channel (TC 1.A.9) family. Acetylcholine receptor (TC 1.A.9.1) subfamily. In terms of tissue distribution, expressed in the brain, liver, olfactory mucosa, pituitary gland and hair cells of the saccule.

The protein localises to the postsynaptic cell membrane. It localises to the cell membrane. The protein is Neuronal acetylcholine receptor subunit alpha-9-II of Oncorhynchus mykiss (Rainbow trout).